The following is a 376-amino-acid chain: Aminomethyltransferase (376 aa).

The protein belongs to the GcvT family. As to quaternary structure, the glycine cleavage system is composed of four proteins: P, T, L and H.

The catalysed reaction is N(6)-[(R)-S(8)-aminomethyldihydrolipoyl]-L-lysyl-[protein] + (6S)-5,6,7,8-tetrahydrofolate = N(6)-[(R)-dihydrolipoyl]-L-lysyl-[protein] + (6R)-5,10-methylene-5,6,7,8-tetrahydrofolate + NH4(+). Functionally, the glycine cleavage system catalyzes the degradation of glycine. In Nostoc sp. (strain PCC 7120 / SAG 25.82 / UTEX 2576), this protein is Aminomethyltransferase.